The chain runs to 319 residues: MIFYTLEHILTHISFSLVSIGITIFLITLSVDEIIGLYDSSEKGVIGTFLCITGLLVTRWAYSGHFPLSNLYESLLFLSWSFAIIHMFPYLKKQKSYVRTITSSSTIFTQGLVTSGLLSEMQQSEILVPALQSQWLMMHVSMMVLGYAALLCGSLLSVALLVITFRKALKIFSKKKAFLKDSFSFVEIQYRNEPSNVLLSTSFISSKNYYRAQLIQQLDRWSSRIISLGFIFLTIGILSGAVWANEAWGSYWNWDPKETWAFITWTMFAIYLHTRTNPNFQSVNSAIVAFLGFIIIWICYFGVNLLGIGLHSYGSFNLH.

The next 7 membrane-spanning stretches (helical) occupy residues 9-29, 44-64, 71-91, 143-163, 225-245, 259-273, and 286-306; these read ILTH…LITL, GVIG…AYSG, LYES…FPYL, MVLG…LLVI, IISL…VWAN, TWAF…IYLH, and AIVA…VNLL.

It belongs to the CcmF/CycK/Ccl1/NrfE/CcsA family. In terms of assembly, may interact with Ccs1.

It localises to the plastid. The protein localises to the chloroplast thylakoid membrane. Functionally, required during biogenesis of c-type cytochromes (cytochrome c6 and cytochrome f) at the step of heme attachment. The protein is Cytochrome c biogenesis protein CcsA of Oenothera argillicola (Appalachian evening primrose).